The primary structure comprises 153 residues: Protein SprT-like (153 aa).

The region spanning 6–148 (LQQLTEQLSL…CGKCGGKIKE (143 aa)) is the SprT-like domain. His67 provides a ligand contact to Zn(2+). The active site involves Glu68. His71 contacts Zn(2+).

This sequence belongs to the SprT family. Zn(2+) serves as cofactor.

It is found in the cytoplasm. In Bacillus licheniformis (strain ATCC 14580 / DSM 13 / JCM 2505 / CCUG 7422 / NBRC 12200 / NCIMB 9375 / NCTC 10341 / NRRL NRS-1264 / Gibson 46), this protein is Protein SprT-like.